The chain runs to 133 residues: DNA-directed RNA polymerase subunit omega (133 aa).

This sequence belongs to the RNA polymerase subunit omega family. In terms of assembly, the RNAP catalytic core consists of 2 alpha, 1 beta, 1 beta' and 1 omega subunit. When a sigma factor is associated with the core the holoenzyme is formed, which can initiate transcription.

The catalysed reaction is RNA(n) + a ribonucleoside 5'-triphosphate = RNA(n+1) + diphosphate. Functionally, promotes RNA polymerase assembly. Latches the N- and C-terminal regions of the beta' subunit thereby facilitating its interaction with the beta and alpha subunits. The sequence is that of DNA-directed RNA polymerase subunit omega from Brucella abortus (strain S19).